Reading from the N-terminus, the 217-residue chain is Protein GrpE (217 aa).

The disordered stretch occupies residues 1–63 (MAETSNSENK…AADSELSLQS (63 aa)). Over residues 10-32 (KTSEEAKASEKNSRSITLEETKL) the composition is skewed to basic and acidic residues. Residues 37 to 63 (SEESTQTTESTQAQAAEAADSELSLQS) are compositionally biased toward low complexity.

It belongs to the GrpE family. In terms of assembly, homodimer.

The protein localises to the cytoplasm. Functionally, participates actively in the response to hyperosmotic and heat shock by preventing the aggregation of stress-denatured proteins, in association with DnaK and GrpE. It is the nucleotide exchange factor for DnaK and may function as a thermosensor. Unfolded proteins bind initially to DnaJ; upon interaction with the DnaJ-bound protein, DnaK hydrolyzes its bound ATP, resulting in the formation of a stable complex. GrpE releases ADP from DnaK; ATP binding to DnaK triggers the release of the substrate protein, thus completing the reaction cycle. Several rounds of ATP-dependent interactions between DnaJ, DnaK and GrpE are required for fully efficient folding. In Leptospira borgpetersenii serovar Hardjo-bovis (strain JB197), this protein is Protein GrpE.